The primary structure comprises 96 residues: MNQEKVLKTLLMPIVSEKMTMLSANNQYAFKVRMDSSKREIKAAVEILLGVNVENVTTLIVKGKKKIFKGRTGSRPNWKKAMVKVSAGQIIDVNRT.

Belongs to the universal ribosomal protein uL23 family. In terms of assembly, part of the 50S ribosomal subunit. Contacts protein L29, and trigger factor when it is bound to the ribosome.

Its function is as follows. One of the early assembly proteins it binds 23S rRNA. One of the proteins that surrounds the polypeptide exit tunnel on the outside of the ribosome. Forms the main docking site for trigger factor binding to the ribosome. This is Large ribosomal subunit protein uL23 from Vesicomyosocius okutanii subsp. Calyptogena okutanii (strain HA).